Reading from the N-terminus, the 351-residue chain is Small ribosomal subunit protein uS2 (351 aa).

Residues 302-351 (QNNYDPSKRGYNPKYVNHKSTFNKFNNKKPAEATSQAKTNEKIVIKAETN) form a disordered region. The segment covering 340-351 (TNEKIVIKAETN) has biased composition (basic and acidic residues).

Belongs to the universal ribosomal protein uS2 family.

The polypeptide is Small ribosomal subunit protein uS2 (Ureaplasma urealyticum serovar 10 (strain ATCC 33699 / Western)).